A 315-amino-acid chain; its full sequence is N-acetylneuraminate lyase (315 aa).

Positions 59 and 60 each coordinate aceneuramate. The active-site Proton donor is tyrosine 149. The Schiff-base intermediate with substrate role is filled by lysine 177. Aceneuramate-binding residues include serine 179, glycine 202, aspartate 204, glutamate 205, and glycine 221.

It belongs to the DapA family. NanA subfamily. In terms of assembly, homotetramer.

The protein localises to the cytoplasm. It catalyses the reaction aceneuramate = aldehydo-N-acetyl-D-mannosamine + pyruvate. It functions in the pathway amino-sugar metabolism; N-acetylneuraminate degradation; D-fructose 6-phosphate from N-acetylneuraminate: step 1/5. Functionally, catalyzes the reversible aldol cleavage of N-acetylneuraminic acid (sialic acid; Neu5Ac) to form pyruvate and N-acetylmannosamine (ManNAc) via a Schiff base intermediate. Cannot use 2,7-anhydro-Neu5Ac. Involved in the degradation of sialic acid, which is present in the host mucus layer and represents a much-coveted source of nutrients for R.gnavus, a prevalent member of the normal gut microbiota. This Mediterraneibacter gnavus (strain ATCC 29149 / DSM 114966 / JCM 6515 / VPI C7-9) (Ruminococcus gnavus) protein is N-acetylneuraminate lyase.